Here is a 341-residue protein sequence, read N- to C-terminus: MTGSNMSDALANAVCQRCQARFSPAERIVNSNGELYHEHCFVCAQCFRPFPEGLFYEFEGRKYCEHDFQMLFAPCCGSCGEFIIGRVIKAMNNNWHPGCFRCELCDVELADLGFVKNAGRHLCRPCHNREKAKGLGKYICQRCHLVIDEQPLMFRSDAYHPDHFNCTHCGKELTAEARELKGELYCLPCHDKMGVPICGACRRPIEGRVVNALGKQWHVEHFVCAKCEKPFLGHRHYEKKGLAYCETHYNQLFGDVCYNCSHVIEGDVVSALNKAWCVSCFSCSTCNSKLTLKNKFVEFDMKPVCKRCYEKFPLELKKRLKKLSELTSRKAQPKATDLNSA.

5 LIM zinc-binding domains span residues 13 to 74 (AVCQ…LFAP), 76 to 133 (CGSC…EKAK), 138 to 195 (YICQ…KMGV), 196 to 255 (PICG…LFGD), and 256 to 315 (VCYN…FPLE). Position 22 is a phosphoserine (Phe22). A Phosphothreonine modification is found at Thr327. A Phosphoserine modification is found at Ser328.

Interacts with TGFB1I1. Interacts with integrin-linked protein kinase 1 (ILK) via the first LIM domain, and in competition with LIMS1. Part of the heterotrimeric IPP complex composed of integrin-linked kinase (ILK), LIMS1 or LIMS2, and PARVA.

The protein localises to the nucleus. Its subcellular location is the cell junction. It is found in the focal adhesion. It localises to the cell membrane. In terms of biological role, adapter protein in a cytoplasmic complex linking beta-integrins to the actin cytoskeleton, bridges the complex to cell surface receptor tyrosine kinases and growth factor receptors. Plays a role in modulating cell spreading and migration. This chain is LIM and senescent cell antigen-like-containing domain protein 2 (LIMS2), found in Homo sapiens (Human).